The chain runs to 104 residues: Iron-sulfur cluster assembly protein CyaY (104 aa).

This sequence belongs to the frataxin family.

Functionally, involved in iron-sulfur (Fe-S) cluster assembly. May act as a regulator of Fe-S biogenesis. This Rickettsia prowazekii (strain Madrid E) protein is Iron-sulfur cluster assembly protein CyaY.